We begin with the raw amino-acid sequence, 76 residues long: Transcription attenuation protein MtrB (76 aa).

Belongs to the MtrB family. In terms of assembly, oligomer of 11 identical subunits arranged in doughnut-like structure.

Functionally, required for transcription attenuation control in the Trp operon. This trans-acting factor seems to recognize a 10 bases nucleotide sequence in the Trp leader transcript causing transcription termination. Binds the leader RNA only in presence of L-tryptophan. The chain is Transcription attenuation protein MtrB (mtrB) from Bacillus pumilus (Bacillus mesentericus).